A 561-amino-acid chain; its full sequence is Asparagine synthetase [glutamine-hydrolyzing] (561 aa).

Catalysis depends on Cys-2, which acts as the For GATase activity. A Glutamine amidotransferase type-2 domain is found at Cys-2 to Lys-191. L-glutamine-binding positions include Arg-49–Val-53, Asn-75–Glu-77, and Asp-97. Positions His-213 to Tyr-536 constitute an Asparagine synthetase domain. Residues Leu-256, Ile-288, and Ser-363–Gly-364 each bind ATP. Residue Lys-385 is modified to N6-acetyllysine. Thr-545 is subject to Phosphothreonine. Ser-557 carries the phosphoserine modification.

The catalysed reaction is L-aspartate + L-glutamine + ATP + H2O = L-asparagine + L-glutamate + AMP + diphosphate + H(+). It participates in amino-acid biosynthesis; L-asparagine biosynthesis; L-asparagine from L-aspartate (L-Gln route): step 1/1. In Pongo abelii (Sumatran orangutan), this protein is Asparagine synthetase [glutamine-hydrolyzing] (ASNS).